Here is a 133-residue protein sequence, read N- to C-terminus: ATP synthase epsilon chain, chloroplastic (133 aa).

This sequence belongs to the ATPase epsilon chain family. In terms of assembly, F-type ATPases have 2 components, CF(1) - the catalytic core - and CF(0) - the membrane proton channel. CF(1) has five subunits: alpha(3), beta(3), gamma(1), delta(1), epsilon(1). CF(0) has three main subunits: a, b and c.

The protein localises to the plastid. It is found in the chloroplast thylakoid membrane. Produces ATP from ADP in the presence of a proton gradient across the membrane. The sequence is that of ATP synthase epsilon chain, chloroplastic from Gossypium barbadense (Sea Island cotton).